The following is a 378-amino-acid chain: Transmembrane 6 superfamily member 2 (378 aa).

The next 10 membrane-spanning stretches (helical) occupy residues 10 to 30 (TVAMSFCALPVSYLLNQVSAF), 34 to 54 (LFVVLTSALILGLLFLAVYSL), 63 to 83 (PLYAVFVIFSFTSVVDLVIAL), 110 to 130 (IFICYWDGTVHYLLYLTMAGA), 140 to 160 (LGLYWLGSFAMSILVFLPGNI), 170 to 190 (PTFFLAILYMLVPCWAGVRIF), 219 to 239 (LALIVYLIFAALFTVFRGLVV), 269 to 289 (MLMYLFYALPFYCLAAYALAF), 291 to 311 (GCSWLPDWALVFAGAIGQAQF), and 332 to 352 (TWATFFLSNLLLALGPHLLAF). EXPERA domains are found at residues 61–186 (YDPL…CWAG) and 217–351 (ADLA…HLLA).

The protein belongs to the TM6SF family. As to expression, highly expressed in the liver at both the mRNA and protein levels.

It localises to the endoplasmic reticulum membrane. Its subcellular location is the endoplasmic reticulum-Golgi intermediate compartment membrane. In terms of biological role, regulator of liver fat metabolism influencing triglyceride secretion and hepatic lipid droplet content. May function as sterol isomerase. This chain is Transmembrane 6 superfamily member 2 (Tm6sf2), found in Mus musculus (Mouse).